Reading from the N-terminus, the 622-residue chain is Calmodulin-binding protein 60 C (622 aa).

Residues 1–19 (MQTRYMERTNSMREKRKLE) show a composition bias toward basic and acidic residues. The tract at residues 1-35 (MQTRYMERTNSMREKRKLEEDDNQQQQQQPERKRP) is disordered. Residues 10-89 (NSMREKRKLE…RLSERSSPKR (80 aa)) are calmodulin-binding. The tract at residues 159-282 (EDDDGWSGEE…AFHKKLNKAG (124 aa)) is DNA-binding.

Belongs to the plant ACBP60 protein family. In terms of assembly, interacts with calmodulin (CaM). Expressed in stems, flowers and root.

The protein localises to the nucleus. Functionally, transcription activator that binds DNA in a sequence-specific manner, likely 5'-GAAATTTTGG-3', to promote the expression of target genes. The protein is Calmodulin-binding protein 60 C of Arabidopsis thaliana (Mouse-ear cress).